Consider the following 303-residue polypeptide: Cyclin-dependent kinase 4 (303 aa).

Position 2 is an N-acetylalanine (Ala-2). One can recognise a Protein kinase domain in the interval 6 to 295 (YEPVAEIGVG…AFRALQHSYL (290 aa)). Residues 12 to 20 (IGVGAYGTV) and Lys-35 contribute to the ATP site. The required for binding D-type cyclins stretch occupies residues 50–56 (PISTVRE). Asp-140 serves as the catalytic Proton acceptor. Residue Thr-172 is modified to Phosphothreonine; by CAK.

Belongs to the protein kinase superfamily. CMGC Ser/Thr protein kinase family. CDC2/CDKX subfamily. As to quaternary structure, component of the D-CDK4 complex, composed of CDK4 and some D-type G1 cyclin (CCND1, CCND2 or CCND3). Interacts directly in the complex with CCND1, CCND2 or CCND3. Interacts with SEI1 and ZNF655. Forms a ternary complex, cyclin D-CDK4-CDKN1B, involved in modulating CDK4 enzymatic activity. Interacts directly with CDKN1B (phosphorylated on 'Tyr-88' and 'Tyr-89'); the interaction allows assembly of the cyclin D-CDK4 complex, Thr-172 phosphorylation, nuclear translocation and enhances the cyclin D-CDK4 complex activity. CDK4 activity is either inhibited or enhanced depending on stoichiometry of complex. The non-tyrosine-phosphorylated form of CDKN1B prevents T-loop phosphorylation of CDK4 producing inactive CDK4. Interacts (unphosphorylated form) with CDK2. Also forms ternary complexes with CDKN1A or CDKN2A. Interacts directly with CDKN1A (via its N-terminal); the interaction promotes the assembly of the cyclin D-CDK4 complex, its nuclear translocation and promotes the cyclin D-dependent enzyme activity of CDK4. Interacts with CCND1; the interaction is prevented with the binding of CCND1 to INSM1 during cell cycle progression. Probably forms a complex composed of chaperones HSP90 and HSP70, co-chaperones CDC37, PPP5C, TSC1 and client protein TSC2, CDK4, AKT, RAF1 and NR3C1; this complex does not contain co-chaperones STIP1/HOP and PTGES3/p23. Interacts with CEBPA (when phosphorylated). Interacts with FNIP1 and FNIP2. Post-translationally, phosphorylation at Thr-172 is required for enzymatic activity. Phosphorylated, in vitro, at this site by CCNH-CDK7, but, in vivo, appears to be phosphorylated by a proline-directed kinase. In the cyclin D-CDK4-CDKN1B complex, this phosphorylation and consequent CDK4 enzyme activity, is dependent on the tyrosine phosphorylation state of CDKN1B. Thus, in proliferating cells, CDK4 within the complex is phosphorylated on Thr-172 in the T-loop. In resting cells, phosphorylation on Thr-172 is prevented by the non-tyrosine-phosphorylated form of CDKN1B.

It is found in the cytoplasm. The protein localises to the nucleus. Its subcellular location is the nucleus membrane. It catalyses the reaction L-seryl-[protein] + ATP = O-phospho-L-seryl-[protein] + ADP + H(+). The enzyme catalyses L-threonyl-[protein] + ATP = O-phospho-L-threonyl-[protein] + ADP + H(+). Its activity is regulated as follows. Both phosphorylation at Thr-172 and binding of a D-type cyclin are necessary for enzymatic activity. Full activation of the cyclin-D-CDK4 complex appears to require other factors such as recruitment of the substrate via a substrate recruitment motif, and/or formation of the CDKN1B ternary complex. Inhibited by INK4 family members. In resting cells, the non-tyrosine-phosphorylated form of CDKN1B prevents phosphorylation at Thr-172 and inactivation, while, in proliferating cells, tyrosine phosphorylation of CDKN1B allows phosphorylation of Thr-172 of CDK4 and subsequent activation. Ser/Thr-kinase component of cyclin D-CDK4 (DC) complexes that phosphorylate and inhibit members of the retinoblastoma (RB) protein family including RB1 and regulate the cell-cycle during G(1)/S transition. Phosphorylation of RB1 allows dissociation of the transcription factor E2F from the RB/E2F complexes and the subsequent transcription of E2F target genes which are responsible for the progression through the G(1) phase. Hypophosphorylates RB1 in early G(1) phase. Cyclin D-CDK4 complexes are major integrators of various mitogenenic and antimitogenic signals. Also phosphorylates SMAD3 in a cell-cycle-dependent manner and represses its transcriptional activity. Component of the ternary complex, cyclin D/CDK4/CDKN1B, required for nuclear translocation and activity of the cyclin D-CDK4 complex. This chain is Cyclin-dependent kinase 4 (CDK4), found in Sus scrofa (Pig).